Reading from the N-terminus, the 136-residue chain is Monothiol glutaredoxin-S3 (136 aa).

One can recognise a Glutaredoxin domain in the interval 18–135 (EREVRRAVEE…PVLKQAGALW (118 aa)). Cys-38 lines the [2Fe-2S] cluster pocket. The Responsive for interaction with TGA factors motif lies at 133–136 (ALWL).

The protein belongs to the glutaredoxin family. CC-type subfamily.

It localises to the cytoplasm. It is found in the nucleus. May only reduce GSH-thiol disulfides, but not protein disulfides. The chain is Monothiol glutaredoxin-S3 (GRXS3) from Oryza sativa subsp. japonica (Rice).